The following is a 317-amino-acid chain: Malate dehydrogenase (317 aa).

Residues 13–18 (GAGNIG) and Asp-38 contribute to the NAD(+) site. Residues Arg-87 and Arg-93 each contribute to the substrate site. NAD(+) is bound by residues Asn-100 and 123–125 (VTN). Substrate is bound by residues Asn-125 and Arg-156. The active-site Proton acceptor is the His-180.

It belongs to the LDH/MDH superfamily. MDH type 3 family.

It catalyses the reaction (S)-malate + NAD(+) = oxaloacetate + NADH + H(+). Catalyzes the reversible oxidation of malate to oxaloacetate. The sequence is that of Malate dehydrogenase from Anaplasma marginale (strain St. Maries).